A 242-amino-acid chain; its full sequence is Probable transcriptional regulatory protein BURPS1710b_1385 (242 aa).

It belongs to the TACO1 family.

Its subcellular location is the cytoplasm. This chain is Probable transcriptional regulatory protein BURPS1710b_1385, found in Burkholderia pseudomallei (strain 1710b).